The following is a 216-amino-acid chain: Uridine kinase (216 aa).

16–23 (GASASGKS) is a binding site for ATP.

Belongs to the uridine kinase family.

The protein resides in the cytoplasm. The enzyme catalyses uridine + ATP = UMP + ADP + H(+). It catalyses the reaction cytidine + ATP = CMP + ADP + H(+). The protein operates within pyrimidine metabolism; CTP biosynthesis via salvage pathway; CTP from cytidine: step 1/3. It participates in pyrimidine metabolism; UMP biosynthesis via salvage pathway; UMP from uridine: step 1/1. The chain is Uridine kinase from Mannheimia succiniciproducens (strain KCTC 0769BP / MBEL55E).